The following is a 125-amino-acid chain: Large ribosomal subunit protein bL12 (125 aa).

The protein belongs to the bacterial ribosomal protein bL12 family. Homodimer. Part of the ribosomal stalk of the 50S ribosomal subunit. Forms a multimeric L10(L12)X complex, where L10 forms an elongated spine to which 2 to 4 L12 dimers bind in a sequential fashion. Binds GTP-bound translation factors.

In terms of biological role, forms part of the ribosomal stalk which helps the ribosome interact with GTP-bound translation factors. Is thus essential for accurate translation. The protein is Large ribosomal subunit protein bL12 of Bradyrhizobium sp. (strain ORS 278).